Consider the following 158-residue polypeptide: Persistence and stress-resistance toxin PasT (158 aa).

Positions 70–158 (GISKTFTTRN…VRAKEVYSAR (89 aa)) are required for resistance of nitrosative stress but not persistence or toxic effects.

The protein belongs to the ribosome association toxin RatA family. In terms of assembly, associates with 50S ribosomes.

Toxic component of a type II toxin-antitoxin (TA) system. Binds to 50S ribosomal subunits, preventing them from associating with 30S subunits to form 70S ribosomes. In this strain of E.coli low levels of PasT complement operon disruption, however high levels are toxic; their effects are abrogated by high level expression of cognate antitoxin PasI. Plays a role in persistence after antibiotic exposure and survival of nitrosative stress; the toxic and persistence phenotypes are conferred by the same N-terminal region of the protein, while the stress resistance effects can be uncoupled from them in deletion mutants. This chain is Persistence and stress-resistance toxin PasT (pasT), found in Escherichia coli O6:H1 (strain CFT073 / ATCC 700928 / UPEC).